We begin with the raw amino-acid sequence, 497 residues long: Zinc finger CCCH domain-containing protein 22 (497 aa).

A C3H1-type zinc finger spans residues 136 to 163 (SESMMICKFFMQQRCRFGSSCRSSHGLD). The disordered stretch occupies residues 236-281 (AQMTDDDGEEEEEEDEQQSASDSEDSVSSDYDEGSPQGIGFLESTN). Over residues 239 to 268 (TDDDGEEEEEEDEQQSASDSEDSVSSDYDE) the composition is skewed to acidic residues. The 47-residue stretch at 300 to 346 (TRGIASKMMASMGYREGMGLGVSGQGILNPILVKVLPAKRSLDYALE) folds into the G-patch domain. A disordered region spans residues 352–387 (ECKSEKQKKKRSRGGKRKRGKKFAEAAKAAKQEEES). Residues 357–372 (KQKKKRSRGGKRKRGK) are compositionally biased toward basic residues. Positions 373 to 387 (KFAEAAKAAKQEEES) are enriched in basic and acidic residues.

The sequence is that of Zinc finger CCCH domain-containing protein 22 from Arabidopsis thaliana (Mouse-ear cress).